The chain runs to 445 residues: Phosphoglucosamine mutase (445 aa).

S102 acts as the Phosphoserine intermediate in catalysis. The Mg(2+) site is built by S102, D241, D243, and D245. S102 carries the post-translational modification Phosphoserine.

Belongs to the phosphohexose mutase family. It depends on Mg(2+) as a cofactor. Activated by phosphorylation.

The enzyme catalyses alpha-D-glucosamine 1-phosphate = D-glucosamine 6-phosphate. Functionally, catalyzes the conversion of glucosamine-6-phosphate to glucosamine-1-phosphate. The sequence is that of Phosphoglucosamine mutase from Acinetobacter baumannii (strain SDF).